Here is a 31-residue protein sequence, read N- to C-terminus: Photosystem II reaction center protein T (31 aa).

The chain crosses the membrane as a helical span at residues 3–23; it reads ALVYTFLLIGTLGIIFFAIFF.

Belongs to the PsbT family. As to quaternary structure, PSII is composed of 1 copy each of membrane proteins PsbA, PsbB, PsbC, PsbD, PsbE, PsbF, PsbH, PsbI, PsbJ, PsbK, PsbL, PsbM, PsbT, PsbY, PsbZ, Psb30/Ycf12, at least 3 peripheral proteins of the oxygen-evolving complex and a large number of cofactors. It forms dimeric complexes.

Its subcellular location is the plastid. The protein localises to the chloroplast thylakoid membrane. Its function is as follows. Found at the monomer-monomer interface of the photosystem II (PS II) dimer, plays a role in assembly and dimerization of PSII. PSII is a light-driven water plastoquinone oxidoreductase, using light energy to abstract electrons from H(2)O, generating a proton gradient subsequently used for ATP formation. The chain is Photosystem II reaction center protein T from Stigeoclonium helveticum (Green alga).